The following is a 241-amino-acid chain: Venom nerve growth factor 2 (241 aa).

The signal sequence occupies residues 1 to 18 (MSMLCYTLITAFLIGIWA). A propeptide spanning residues 19–125 (APKSEDNVPL…SLNRNIRAKR (107 aa)) is cleaved from the precursor. Residues 47–67 (GLKTSRNTDQRHPAPQKAEDQ) form a disordered region. 3 disulfide bridges follow: cysteine 139-cysteine 203, cysteine 181-cysteine 231, and cysteine 191-cysteine 233.

Belongs to the NGF-beta family. In terms of assembly, homodimer; non-covalently linked. In terms of tissue distribution, expressed by the venom gland.

Its subcellular location is the secreted. Nerve growth factor is important for the development and maintenance of the sympathetic and sensory nervous systems. It stimulates division and differentiation of sympathetic and embryonic sensory neurons as well as basal forebrain cholinergic neurons in the brain. Its relevance in the snake venom is not clear. However, it has been shown to inhibit metalloproteinase-dependent proteolysis of platelet glycoprotein Ib alpha, suggesting a metalloproteinase inhibition to prevent metalloprotease autodigestion and/or protection against prey proteases. Binds a lipid between the two protein chains in the homodimer. The lipid-bound form promotes histamine relase from mouse mast cells, contrary to the lipid-free form. This chain is Venom nerve growth factor 2, found in Naja sputatrix (Malayan spitting cobra).